The following is a 271-amino-acid chain: MPELPEVEVTRRSFAGAIEGATVRGITVGKPLRWPLGTEPAVLVGRRVCGVRRRGKYLLLDLDEGLLLIHLGMSGSLRFARDLPARGAHDHFELITDHGTLRLHDPRRFGAVVWAAGESDPRARKLLDGWGLEPLGEDFAFEAFHAGLRAKRTPIKQLLLAGTVVVGVGNIYACEVLFLAGIRPTTRACAIGPQRARRLHGAIREVLARAVERGGSTLRDFSSADGSAGHFQLEANVYGRAGLQCRQCGTPVRLSRQGQRSTYFCPHCQRA.

The active-site Schiff-base intermediate with DNA is Pro2. The Proton donor role is filled by Glu3. Residue Lys56 is the Proton donor; for beta-elimination activity of the active site. Residues His89, Arg107, and Lys151 each coordinate DNA. The FPG-type zinc finger occupies 236 to 270 (NVYGRAGLQCRQCGTPVRLSRQGQRSTYFCPHCQR). Residue Arg260 is the Proton donor; for delta-elimination activity of the active site.

Belongs to the FPG family. Monomer. Zn(2+) is required as a cofactor.

The catalysed reaction is Hydrolysis of DNA containing ring-opened 7-methylguanine residues, releasing 2,6-diamino-4-hydroxy-5-(N-methyl)formamidopyrimidine.. It carries out the reaction 2'-deoxyribonucleotide-(2'-deoxyribose 5'-phosphate)-2'-deoxyribonucleotide-DNA = a 3'-end 2'-deoxyribonucleotide-(2,3-dehydro-2,3-deoxyribose 5'-phosphate)-DNA + a 5'-end 5'-phospho-2'-deoxyribonucleoside-DNA + H(+). Involved in base excision repair of DNA damaged by oxidation or by mutagenic agents. Acts as a DNA glycosylase that recognizes and removes damaged bases. Has a preference for oxidized purines, such as 7,8-dihydro-8-oxoguanine (8-oxoG). Has AP (apurinic/apyrimidinic) lyase activity and introduces nicks in the DNA strand. Cleaves the DNA backbone by beta-delta elimination to generate a single-strand break at the site of the removed base with both 3'- and 5'-phosphates. The polypeptide is Formamidopyrimidine-DNA glycosylase (Acidovorax ebreus (strain TPSY) (Diaphorobacter sp. (strain TPSY))).